We begin with the raw amino-acid sequence, 715 residues long: Elongation factor G (715 aa).

Positions 8–290 (NRYRNIGICA…AVIDFLPAPT (283 aa)) constitute a tr-type G domain. Residues 17 to 24 (AHVDAGKT), 88 to 92 (DTPGH), and 142 to 145 (NKMD) contribute to the GTP site.

It belongs to the TRAFAC class translation factor GTPase superfamily. Classic translation factor GTPase family. EF-G/EF-2 subfamily.

It is found in the cytoplasm. Its function is as follows. Catalyzes the GTP-dependent ribosomal translocation step during translation elongation. During this step, the ribosome changes from the pre-translocational (PRE) to the post-translocational (POST) state as the newly formed A-site-bound peptidyl-tRNA and P-site-bound deacylated tRNA move to the P and E sites, respectively. Catalyzes the coordinated movement of the two tRNA molecules, the mRNA and conformational changes in the ribosome. The sequence is that of Elongation factor G from Pseudomonas fluorescens (strain ATCC BAA-477 / NRRL B-23932 / Pf-5).